The sequence spans 402 residues: Elongation factor Tu (402 aa).

The region spanning 16–211 is the tr-type G domain; sequence KEHINIGTIG…AVDSYIDSPV (196 aa). Residues 25–32 are G1; sequence GHVDHGKT. 25–32 contributes to the GTP binding site; it reads GHVDHGKT. Threonine 32 is a Mg(2+) binding site. Residues 66-70 form a G2 region; that stretch reads GITIN. The tract at residues 87–90 is G3; sequence DCPG. GTP-binding positions include 87 to 91 and 142 to 145; these read DCPGH and NKID. A G4 region spans residues 142-145; that stretch reads NKID. Residues 181–183 form a G5 region; it reads SAR.

The protein belongs to the TRAFAC class translation factor GTPase superfamily. Classic translation factor GTPase family. EF-Tu/EF-1A subfamily. Monomer.

The protein resides in the cytoplasm. The catalysed reaction is GTP + H2O = GDP + phosphate + H(+). Functionally, GTP hydrolase that promotes the GTP-dependent binding of aminoacyl-tRNA to the A-site of ribosomes during protein biosynthesis. This is Elongation factor Tu from Mesomycoplasma hyopneumoniae (strain 232) (Mycoplasma hyopneumoniae).